The primary structure comprises 216 residues: Probable transaldolase (216 aa).

The active-site Schiff-base intermediate with substrate is the lysine 83.

This sequence belongs to the transaldolase family. Type 3B subfamily.

It localises to the cytoplasm. The catalysed reaction is D-sedoheptulose 7-phosphate + D-glyceraldehyde 3-phosphate = D-erythrose 4-phosphate + beta-D-fructose 6-phosphate. It participates in carbohydrate degradation; pentose phosphate pathway; D-glyceraldehyde 3-phosphate and beta-D-fructose 6-phosphate from D-ribose 5-phosphate and D-xylulose 5-phosphate (non-oxidative stage): step 2/3. In terms of biological role, transaldolase is important for the balance of metabolites in the pentose-phosphate pathway. This Sorangium cellulosum (strain So ce56) (Polyangium cellulosum (strain So ce56)) protein is Probable transaldolase.